Here is a 408-residue protein sequence, read N- to C-terminus: Aspartate aminotransferase (408 aa).

L-aspartate is bound by residues Gly45, Trp134, and Asn184. Lys247 carries the post-translational modification N6-(pyridoxal phosphate)lysine. Position 382 (Arg382) interacts with L-aspartate.

The protein belongs to the class-I pyridoxal-phosphate-dependent aminotransferase family. Homodimer. Pyridoxal 5'-phosphate serves as cofactor.

It is found in the cytoplasm. The enzyme catalyses L-aspartate + 2-oxoglutarate = oxaloacetate + L-glutamate. Functionally, catalyzes the reversible conversion of aspartate and 2-oxoglutarate to glutamate and oxaloacetate. Does not have prephenate aminotransferase activity. The sequence is that of Aspartate aminotransferase from Streptomyces avermitilis (strain ATCC 31267 / DSM 46492 / JCM 5070 / NBRC 14893 / NCIMB 12804 / NRRL 8165 / MA-4680).